The chain runs to 485 residues: MFS-type transporter phm3 (485 aa).

The disordered stretch occupies residues 1–22; it reads MSLQDPTKEHNNTSPSPKDEKT. 12 helical membrane-spanning segments follow: residues 55-75, 83-103, 113-133, 144-164, 175-195, 203-223, 278-298, 317-337, 357-377, 384-404, 421-441, and 449-469; these read FTLY…LLVA, IVAS…PFLL, LWLY…CALS, FICG…IADL, ALFG…GGFV, WTFY…AVIM, PIVL…YLLF, GLAF…FAIL, LVLM…YGWS, WIVP…ILMP, ALAV…LAGP, and LGWG…VPFV.

It belongs to the major facilitator superfamily.

Its subcellular location is the cell membrane. MFS-type transporter; part of the gene cluster that mediates the biosynthesis of the trans-fused decalin-containing tetramic acid phomasetin. The polypeptide is MFS-type transporter phm3 (Pyrenochaetopsis sp).